The primary structure comprises 170 residues: dCTP pyrophosphatase 1 (170 aa).

The tract at residues 1-25 is disordered; that stretch reads MSTAGDGERGTVGQEDSAAARPFRF. Position 2 is an N-acetylserine (serine 2). At serine 2 the chain carries Phosphoserine. Residues histidine 38 and 47-51 each bind substrate; that span reads WEQFH. Positions 63 and 66 each coordinate Mg(2+). Tryptophan 73 contributes to the substrate binding site. Mg(2+) is bound by residues glutamate 95 and aspartate 98. Tyrosine 102 is a binding site for substrate. Residues 150 to 170 form a disordered region; the sequence is SENQAVGAGDPASELRDQAST.

Homotetramer. Mg(2+) serves as cofactor. As to expression, ubiquitous. Highly expressed in heart, liver, skeletal muscle, cerebellum, brain, and salivary gland.

Its subcellular location is the cytoplasm. The protein resides in the cytosol. The enzyme catalyses dCTP + H2O = dCMP + diphosphate + H(+). With respect to regulation, inhibited by divalent calcium or cadmium ions. Hydrolyzes deoxynucleoside triphosphates (dNTPs) to the corresponding nucleoside monophosphates. Has a strong preference for dCTP and its analogs including 5-iodo-dCTP and 5-methyl-dCTP for which it may even have a higher efficiency. May protect DNA or RNA against the incorporation of these genotoxic nucleotide analogs through their catabolism. This chain is dCTP pyrophosphatase 1, found in Mus musculus (Mouse).